An 863-amino-acid polypeptide reads, in one-letter code: Adenosylcobalamin biosynthesis bifunctional protein CobDQ (863 aa).

The tract at residues 1–373 (MNLPEHGGNL…LKSRKKTPSI (373 aa)) is putative threonine-phosphate decarboxylase. O-phospho-L-threonine-binding positions include 6–7 (HG), N30, and N159. K214 is modified (N6-(pyridoxal phosphate)lysine). 2 residues coordinate O-phospho-L-threonine: R323 and R337. The tract at residues 374 to 863 (MFQGTASNVG…NLIYRKLGLG (490 aa)) is cobyric acid synthase. The 189-residue stretch at 622–810 (RLDVVLIDIP…IHGIFDKDEF (189 aa)) folds into the GATase cobBQ-type domain. The active-site Nucleophile is C704. H802 is a catalytic residue.

It in the N-terminal section; belongs to the class-II pyridoxal-phosphate-dependent aminotransferase family. The protein in the C-terminal section; belongs to the CobB/CobQ family. CobQ subfamily. The cofactor is pyridoxal 5'-phosphate.

The enzyme catalyses O-phospho-L-threonine + H(+) = (R)-1-aminopropan-2-yl phosphate + CO2. It functions in the pathway cofactor biosynthesis; adenosylcobalamin biosynthesis. Its function is as follows. Catalyzes two activities which are involved in the adenosylcobalamin biosynthesis: decarboxylates L-threonine-O-3-phosphate to yield (R)-1-amino-2-propanol O-2-phosphate, the precursor for the linkage between the nucleotide loop and the corrin ring in cobalamin, and catalyzes amidations at positions B, D, E, and G on adenosylcobyrinic A,C-diamide. NH(2) groups are provided by glutamine, and one molecule of ATP is hydrogenolyzed for each amidation. This chain is Adenosylcobalamin biosynthesis bifunctional protein CobDQ (cobDQ), found in Leptospira interrogans serogroup Icterohaemorrhagiae serovar Lai (strain 56601).